A 214-amino-acid chain; its full sequence is Urease accessory protein UreG (214 aa).

Residue 23–30 (GPVGSGKT) coordinates GTP.

It belongs to the SIMIBI class G3E GTPase family. UreG subfamily. As to quaternary structure, homodimer. UreD, UreF and UreG form a complex that acts as a GTP-hydrolysis-dependent molecular chaperone, activating the urease apoprotein by helping to assemble the nickel containing metallocenter of UreC. The UreE protein probably delivers the nickel.

The protein localises to the cytoplasm. Its function is as follows. Facilitates the functional incorporation of the urease nickel metallocenter. This process requires GTP hydrolysis, probably effectuated by UreG. This Bordetella pertussis (strain Tohama I / ATCC BAA-589 / NCTC 13251) protein is Urease accessory protein UreG.